The primary structure comprises 315 residues: Methionyl-tRNA formyltransferase (315 aa).

Residue 113-116 participates in (6S)-5,6,7,8-tetrahydrofolate binding; the sequence is SLLP.

It belongs to the Fmt family.

It catalyses the reaction L-methionyl-tRNA(fMet) + (6R)-10-formyltetrahydrofolate = N-formyl-L-methionyl-tRNA(fMet) + (6S)-5,6,7,8-tetrahydrofolate + H(+). Its function is as follows. Attaches a formyl group to the free amino group of methionyl-tRNA(fMet). The formyl group appears to play a dual role in the initiator identity of N-formylmethionyl-tRNA by promoting its recognition by IF2 and preventing the misappropriation of this tRNA by the elongation apparatus. This is Methionyl-tRNA formyltransferase from Yersinia enterocolitica serotype O:8 / biotype 1B (strain NCTC 13174 / 8081).